The primary structure comprises 212 residues: Imidazole glycerol phosphate synthase subunit HisH (212 aa).

One can recognise a Glutamine amidotransferase type-1 domain in the interval 3–211; sequence LIAVIDYDMG…VQQVQKLALV (209 aa). The active-site Nucleophile is Cys-81. Residues His-186 and Glu-188 contribute to the active site.

As to quaternary structure, heterodimer of HisH and HisF.

Its subcellular location is the cytoplasm. It carries out the reaction 5-[(5-phospho-1-deoxy-D-ribulos-1-ylimino)methylamino]-1-(5-phospho-beta-D-ribosyl)imidazole-4-carboxamide + L-glutamine = D-erythro-1-(imidazol-4-yl)glycerol 3-phosphate + 5-amino-1-(5-phospho-beta-D-ribosyl)imidazole-4-carboxamide + L-glutamate + H(+). It catalyses the reaction L-glutamine + H2O = L-glutamate + NH4(+). It functions in the pathway amino-acid biosynthesis; L-histidine biosynthesis; L-histidine from 5-phospho-alpha-D-ribose 1-diphosphate: step 5/9. Functionally, IGPS catalyzes the conversion of PRFAR and glutamine to IGP, AICAR and glutamate. The HisH subunit catalyzes the hydrolysis of glutamine to glutamate and ammonia as part of the synthesis of IGP and AICAR. The resulting ammonia molecule is channeled to the active site of HisF. The chain is Imidazole glycerol phosphate synthase subunit HisH from Microcystis aeruginosa (strain NIES-843 / IAM M-2473).